The chain runs to 92 residues: Defensin-like protein 96 (92 aa).

An N-terminal signal peptide occupies residues 1 to 29; the sequence is MGSLRLSTVAIAVVVCLSILLISPTEVDG. 4 cysteine pairs are disulfide-bonded: Cys33-Cys80, Cys40-Cys65, Cys49-Cys77, and Cys53-Cys79.

The protein belongs to the DEFL family.

Its subcellular location is the secreted. The chain is Defensin-like protein 96 from Arabidopsis thaliana (Mouse-ear cress).